A 495-amino-acid chain; its full sequence is UDP-N-acetylmuramoyl-L-alanyl-D-glutamate--2,6-diaminopimelate ligase (495 aa).

UDP-N-acetyl-alpha-D-muramoyl-L-alanyl-D-glutamate-binding positions include L27, S29, and 44–46; that span reads HQA. 116 to 122 lines the ATP pocket; that stretch reads GTNGKTT. UDP-N-acetyl-alpha-D-muramoyl-L-alanyl-D-glutamate is bound by residues N157, 158–159, S185, Q191, and R193; that span reads TT. Residue K225 is modified to N6-carboxylysine. Residues R390, 414–417, G465, and E469 contribute to the meso-2,6-diaminopimelate site; that span reads DNPR. The Meso-diaminopimelate recognition motif motif lies at 414–417; sequence DNPR.

This sequence belongs to the MurCDEF family. MurE subfamily. Requires Mg(2+) as cofactor. Post-translationally, carboxylation is probably crucial for Mg(2+) binding and, consequently, for the gamma-phosphate positioning of ATP.

Its subcellular location is the cytoplasm. The catalysed reaction is UDP-N-acetyl-alpha-D-muramoyl-L-alanyl-D-glutamate + meso-2,6-diaminopimelate + ATP = UDP-N-acetyl-alpha-D-muramoyl-L-alanyl-gamma-D-glutamyl-meso-2,6-diaminopimelate + ADP + phosphate + H(+). Its pathway is cell wall biogenesis; peptidoglycan biosynthesis. Its function is as follows. Catalyzes the addition of meso-diaminopimelic acid to the nucleotide precursor UDP-N-acetylmuramoyl-L-alanyl-D-glutamate (UMAG) in the biosynthesis of bacterial cell-wall peptidoglycan. In Escherichia coli O157:H7, this protein is UDP-N-acetylmuramoyl-L-alanyl-D-glutamate--2,6-diaminopimelate ligase.